A 911-amino-acid polypeptide reads, in one-letter code: MPVVSLAKVVTSPAVAGDLAVRVPFIYGKRLVSNRVSFGKLRRRSCIGQCVRSELQSPRVLGSVTDLALDNSVENGHLPKGDSWAVHKFGGTCVGNSERIKDVAAVVVKDDSERKLVVVSAMSKVTDMMYDLIHRAESRDDSYLSALSGVLEKHRATAVDLLDGDELSSFLARLNDDINNLKAMLRAIYIAGHATESFSDFVVGHGELWSAQMLAAVVRKSGLDCTWMDARDVLVVIPTSSNQVDPDFVESEKRLEKWFTQNSAKIIIATGFIASTPQNIPTTLKRDGSDFSAAIMSALFRSHQLTIWTDVDGVYSADPRKVSEAVVLKTLSYQEAWEMSYFGANVLHPRTIIPVMKYDIPIVIRNIFNLSAPGTMICRQIDDEDGFKLDAPVKGFATIDNLALVNVEGTGMAGVPGTASAIFSAVKEVGANVIMISQASSEHSVCFAVPEKEVKAVSEALNSRFRQALAGGRLSQIEIIPNCSILAAVGQKMASTPGVSATFFNALAKANINIRAIAQGCSEFNITVVVKREDCIRALRAVHSRFYLSRTTLAVGIIGPGLIGGTLLDQIRDQAAVLKEEFKIDLRVIGITGSSKMLMSESGIDLSRWRELMKEEGEKADMEKFTQYVKGNHFIPNSVMVDCTADADIASCYYDWLLRGIHVVTPNKKANSGPLDQYLKIRDLQRKSYTHYFYEATVGAGLPIISTLRGLLETGDKILRIEGIFSGTLSYLFNNFVGTRSFSEVVAEAKQAGFTEPDPRDDLSGTDVARKVTILARESGLKLDLEGLPVQNLVPKPLQACASAEEFMEKLPQFDEELSKQREEAEAAGEVLRYVGVVDAVEKKGTVELKRYKKDHPFAQLSGADNIIAFTTKRYKEQPLIVRGPGAGAQVTAGGIFSDILRLAFYLGAPS.

A chloroplast-targeting transit peptide spans 1–82 (MPVVSLAKVV…VENGHLPKGD (82 aa)). Residues 83–331 (SWAVHKFGGT…VSEAVVLKTL (249 aa)) form an aspartokinase region. The segment at 332 to 557 (SYQEAWEMSY…LSRTTLAVGI (226 aa)) is interface. 2 ACT domains span residues 407-482 (VEGT…IIPN) and 488-565 (AVGQ…LIGG). The homoserine dehydrogenase stretch occupies residues 558–911 (IGPGLIGGTL…RLAFYLGAPS (354 aa)). Ile-563 and Thr-644 together coordinate NAD(+). NADP(+) contacts are provided by Ile-563, Thr-644, and Lys-668. Ile-563, Thr-644, and Lys-668 together coordinate NADPH. Glu-695, Val-698, Ala-700, and Leu-702 together coordinate Na(+). The NADP(+) site is built by Gly-753 and Glu-756. L-homoserine-binding residues include Glu-756 and Asp-767. The active-site Proton donor is Lys-771. Position 888 (Gly-888) interacts with NAD(+). Gly-888 contributes to the NADP(+) binding site. Gly-888 lines the NADPH pocket.

The protein in the N-terminal section; belongs to the aspartokinase family. It in the C-terminal section; belongs to the homoserine dehydrogenase family. Homo- or heterodimer. A metal cation is required as a cofactor.

The protein resides in the plastid. It localises to the chloroplast. The catalysed reaction is L-homoserine + NADP(+) = L-aspartate 4-semialdehyde + NADPH + H(+). The enzyme catalyses L-homoserine + NAD(+) = L-aspartate 4-semialdehyde + NADH + H(+). It catalyses the reaction L-aspartate + ATP = 4-phospho-L-aspartate + ADP. It participates in amino-acid biosynthesis; L-lysine biosynthesis via DAP pathway; (S)-tetrahydrodipicolinate from L-aspartate: step 1/4. The protein operates within amino-acid biosynthesis; L-methionine biosynthesis via de novo pathway; L-homoserine from L-aspartate: step 1/3. Its pathway is amino-acid biosynthesis; L-methionine biosynthesis via de novo pathway; L-homoserine from L-aspartate: step 3/3. It functions in the pathway amino-acid biosynthesis; L-threonine biosynthesis; L-threonine from L-aspartate: step 1/5. It participates in amino-acid biosynthesis; L-threonine biosynthesis; L-threonine from L-aspartate: step 3/5. Inhibition of aspartate kinase activity by threonine and leucine and 3-fold activation by cysteine, isoleucine, valine, serine and alanine at 2.5 mM. Partial inhibition of homoserine dehydrogenase activity by threonine and cysteine (14% of activity remaining at saturation with either amino acid). No synergy between the effectors for both activation or inhibition. Functionally, bifunctional aspartate kinase and homoserine dehydrogenase that catalyzes the first and the third steps toward the synthesis of lysine, methionine and threonine from aspartate. This is Bifunctional aspartokinase/homoserine dehydrogenase 1, chloroplastic from Arabidopsis thaliana (Mouse-ear cress).